A 341-amino-acid polypeptide reads, in one-letter code: tRNA N6-adenosine threonylcarbamoyltransferase (341 aa).

Fe cation contacts are provided by His-111 and His-115. Substrate is bound by residues 134–138 (LVSGG), Asp-167, Gly-180, and Asn-272. Asp-300 serves as a coordination point for Fe cation.

This sequence belongs to the KAE1 / TsaD family. Fe(2+) is required as a cofactor.

It localises to the cytoplasm. The catalysed reaction is L-threonylcarbamoyladenylate + adenosine(37) in tRNA = N(6)-L-threonylcarbamoyladenosine(37) in tRNA + AMP + H(+). Functionally, required for the formation of a threonylcarbamoyl group on adenosine at position 37 (t(6)A37) in tRNAs that read codons beginning with adenine. Is involved in the transfer of the threonylcarbamoyl moiety of threonylcarbamoyl-AMP (TC-AMP) to the N6 group of A37, together with TsaE and TsaB. TsaD likely plays a direct catalytic role in this reaction. This Edwardsiella ictaluri (strain 93-146) protein is tRNA N6-adenosine threonylcarbamoyltransferase.